The sequence spans 639 residues: Protein argonaute (639 aa).

The interval 1–100 (MYLNLYKIDI…YIKKLFLDND (100 aa)) is N-terminal domain. The interval 101-153 (FYFKKGNNFISNSEVFSLDSNENVNAHLTYKIKIHNISNEYYLSILPKFTFLS) is linker L1. The tract at residues 154-209 (KEPALESAIKSGYLYNIKSGKSFPYISGLDGILKIDIGNNQIVEVAYPENYLFNFT) is PAZ domain. Positions 210–292 (TRDAEKYGFS…KYSFYKNEQP (83 aa)) are linker L2. Positions 293 to 424 (LKAIFFFSSK…YVYKMGNFIP (132 aa)) are mid domain. The interval 425–639 (ECKPFILKKM…DYEWKLYIPY (215 aa)) is PIWI domain. Residues Asp446, Glu482, Asp516, and Asn624 contribute to the active site. Residue Asp446 coordinates Mn(2+). Residues Asp516 and Asn624 each coordinate Mn(2+).

Belongs to the argonaute family. Long pAgo subfamily. It depends on Mn(2+) as a cofactor.

The protein localises to the cytoplasm. In terms of biological role, an RNA-guided ssDNA endonuclease that may play a role in defense against invading mobile genetic elements. Uses short 5'-OH-ssRNA sequences as guides (gRNA) to bind complementary target DNA (tDNA) or target RNA resulting in target cleavage. The cleavage site is 10 nucleotides (nt) downstream of the target residue base-paired with the 5'-end of the gRNA. Reaction rates are fastest on 5'-OH-gRNA:tDNA followed by 5'-OH-gRNA:target RNA. gRNA between 17-21 nt supports equivalent rates of cleavage, has no preferred 5'-nt. Has weak activity on tDNA with 5'-phospho-gRNA, yielding products 1-2 nt longer. Unlike other characterized prokaryotic Ago proteins symmetric mismatches centered around the cleavage site reduce cleavage efficiency. This is Protein argonaute from Marinitoga piezophila (strain DSM 14283 / JCM 11233 / KA3).